Reading from the N-terminus, the 361-residue chain is Probable pectinesterase 49 (361 aa).

The N-terminal stretch at M1–A22 is a signal peptide. N128 carries N-linked (GlcNAc...) asparagine glycosylation. Residue Q174 participates in substrate binding. D197 acts as the Proton donor in catalysis. D218 acts as the Nucleophile in catalysis. Residues R275 and W277 each coordinate substrate.

This sequence belongs to the pectinesterase family. In terms of tissue distribution, expressed in flower buds.

It is found in the secreted. The protein localises to the cell wall. The catalysed reaction is [(1-&gt;4)-alpha-D-galacturonosyl methyl ester](n) + n H2O = [(1-&gt;4)-alpha-D-galacturonosyl](n) + n methanol + n H(+). The protein operates within glycan metabolism; pectin degradation; 2-dehydro-3-deoxy-D-gluconate from pectin: step 1/5. Acts in the modification of cell walls via demethylesterification of cell wall pectin. This chain is Probable pectinesterase 49 (PME49), found in Arabidopsis thaliana (Mouse-ear cress).